Consider the following 287-residue polypeptide: 3-methyl-2-oxobutanoate hydroxymethyltransferase (287 aa).

A compositionally biased stretch (polar residues) spans 1 to 19 (MSTLPKTLTLDTSTSRANP). The segment at 1–24 (MSTLPKTLTLDTSTSRANPTPQPM) is disordered. 2 residues coordinate Mg(2+): Asp66 and Asp105. 3-methyl-2-oxobutanoate contacts are provided by residues 66–67 (DS), Asp105, and Lys135. Glu137 lines the Mg(2+) pocket. The active-site Proton acceptor is Glu204.

It belongs to the PanB family. In terms of assembly, homodecamer; pentamer of dimers. Requires Mg(2+) as cofactor.

It is found in the cytoplasm. It carries out the reaction 3-methyl-2-oxobutanoate + (6R)-5,10-methylene-5,6,7,8-tetrahydrofolate + H2O = 2-dehydropantoate + (6S)-5,6,7,8-tetrahydrofolate. It functions in the pathway cofactor biosynthesis; (R)-pantothenate biosynthesis; (R)-pantoate from 3-methyl-2-oxobutanoate: step 1/2. Functionally, catalyzes the reversible reaction in which hydroxymethyl group from 5,10-methylenetetrahydrofolate is transferred onto alpha-ketoisovalerate to form ketopantoate. The sequence is that of 3-methyl-2-oxobutanoate hydroxymethyltransferase from Sphingopyxis alaskensis (strain DSM 13593 / LMG 18877 / RB2256) (Sphingomonas alaskensis).